The primary structure comprises 338 residues: Probable G-protein coupled receptor 160 (338 aa).

The Extracellular portion of the chain corresponds to M1–D23. N8 is a glycosylation site (N-linked (GlcNAc...) asparagine). A helical membrane pass occupies residues V24–G44. Over M45 to F58 the chain is Cytoplasmic. Residues C59 to F79 traverse the membrane as a helical segment. Topologically, residues R80–H93 are extracellular. Residues I94–L114 traverse the membrane as a helical segment. Topologically, residues T115–K136 are cytoplasmic. Residues L137–D157 form a helical membrane-spanning segment. Topologically, residues P158–Y177 are extracellular. The helical transmembrane segment at V178 to I198 threads the bilayer. Residues T199 to L244 are Cytoplasmic-facing. Residues I245–L265 traverse the membrane as a helical segment. Over K266–Q268 the chain is Extracellular. A helical transmembrane segment spans residues I269–A289. The Cytoplasmic segment spans residues T290–C338.

Belongs to the G-protein coupled receptor 1 family.

The protein resides in the cell membrane. Its function is as follows. Orphan receptor. The protein is Probable G-protein coupled receptor 160 (GPR160) of Homo sapiens (Human).